The primary structure comprises 445 residues: POU domain, class 3, transcription factor 2 (445 aa).

4 disordered regions span residues Thr63–Ala173, Leu203–Ser269, Glu336–Thr361, and Glu411–Gln445. Positions Gly68–Gly90 are enriched in gly residues. The segment covering Gln125–Gln151 has biased composition (low complexity). Residues Leu217 to His226 show a composition bias toward basic and acidic residues. Basic residues predominate over residues Ala227–Pro237. A compositionally biased stretch (pro residues) spans Gln239–His253. In terms of domain architecture, POU-specific spans Glu264–Asp338. Ser343 bears the Phosphoserine mark. Positions Lys356–Thr415 form a DNA-binding region, homeobox.

Belongs to the POU transcription factor family. Class-3 subfamily. In terms of assembly, interacts with PQBP1. Interaction with ISL1. As to expression, expressed specifically at high levels in the brain.

The protein resides in the nucleus. In terms of biological role, transcription factor that plays a key role in neuronal differentiation. Binds preferentially to the recognition sequence which consists of two distinct half-sites, ('GCAT') and ('TAAT'), separated by a non-conserved spacer region of 0, 2, or 3 nucleotides. Acts as a transcriptional activator when binding cooperatively with SOX4, SOX11, or SOX12 to gene promoters. The combination of three transcription factors, ASCL1, POU3F2/BRN2 and MYT1L, is sufficient to reprogram fibroblasts and other somatic cells into induced neuronal (iN) cells in vitro. Acts downstream of ASCL1, accessing chromatin that has been opened by ASCL1, and promotes transcription of neuronal genes. The chain is POU domain, class 3, transcription factor 2 (Pou3f2) from Rattus norvegicus (Rat).